A 157-amino-acid polypeptide reads, in one-letter code: Endoribonuclease YbeY (157 aa).

Residues His-116, His-120, and His-126 each coordinate Zn(2+).

It belongs to the endoribonuclease YbeY family. Zn(2+) is required as a cofactor.

It localises to the cytoplasm. In terms of biological role, single strand-specific metallo-endoribonuclease involved in late-stage 70S ribosome quality control and in maturation of the 3' terminus of the 16S rRNA. This chain is Endoribonuclease YbeY, found in Arthrobacter sp. (strain FB24).